The sequence spans 311 residues: Delta(1)-pyrroline-2-carboxylate/Delta(1)-piperideine-2-carboxylate reductase (311 aa).

This sequence belongs to the ornithine cyclodeaminase/mu-crystallin family. Homodimer.

The enzyme catalyses L-pipecolate + NAD(+) = Delta(1)-piperideine-2-carboxylate + NADH + H(+). It carries out the reaction L-pipecolate + NADP(+) = Delta(1)-piperideine-2-carboxylate + NADPH + H(+). The catalysed reaction is L-proline + NAD(+) = 1-pyrroline-2-carboxylate + NADH + H(+). It catalyses the reaction L-proline + NADP(+) = 1-pyrroline-2-carboxylate + NADPH + H(+). It participates in amino-acid degradation. In terms of biological role, catalyzes the reduction of both Delta(1)-pyrroline-2-carboxylate (Pyr2C) and Delta(1)-piperideine-2-carboxylate (Pip2C) to L-proline and L-pipecolate, respectively, using NADPH or NADH as the electron donor. Can also catalyze the reverse oxidation reactions, albeit at a much lower rate. Together with LhpH, is involved in a trans-3-hydroxy-L-proline (t3LHyp) degradation pathway to L-proline, which allows A.brasilense to grow on t3LHyp as a sole carbon source. Also appears to be involved in D-proline and D-lysine metabolism. Does not show ornithine cyclodeaminase (OCD) activity. The sequence is that of Delta(1)-pyrroline-2-carboxylate/Delta(1)-piperideine-2-carboxylate reductase from Azospirillum brasilense.